Here is a 156-residue protein sequence, read N- to C-terminus: Cellulose synthase operon protein D (156 aa).

It functions in the pathway glycan metabolism; bacterial cellulose biosynthesis. Its function is as follows. May have a major role in the perfection of crystallization, involved either in the pore structure itself or in the organization of the pores within the linear array of terminal synthesizing complexes (TCs). The chain is Cellulose synthase operon protein D from Komagataeibacter xylinus (Gluconacetobacter xylinus).